The sequence spans 255 residues: tRNA pseudouridine synthase A (255 aa).

Aspartate 60 (nucleophile) is an active-site residue. Tyrosine 118 contacts substrate.

This sequence belongs to the tRNA pseudouridine synthase TruA family. Homodimer.

It carries out the reaction uridine(38/39/40) in tRNA = pseudouridine(38/39/40) in tRNA. Formation of pseudouridine at positions 38, 39 and 40 in the anticodon stem and loop of transfer RNAs. The protein is tRNA pseudouridine synthase A of Leuconostoc mesenteroides subsp. mesenteroides (strain ATCC 8293 / DSM 20343 / BCRC 11652 / CCM 1803 / JCM 6124 / NCDO 523 / NBRC 100496 / NCIMB 8023 / NCTC 12954 / NRRL B-1118 / 37Y).